A 341-amino-acid chain; its full sequence is Holliday junction branch migration complex subunit RuvB (341 aa).

Residues 1-182 are large ATPase domain (RuvB-L); sequence MTDADPTLRP…FGIPTRLLFY (182 aa). Residues Leu-21, Arg-22, Gly-63, Lys-66, Thr-67, Thr-68, 129-131, Arg-172, Tyr-182, and Arg-219 each bind ATP; that span reads EDF. Thr-67 contacts Mg(2+). The tract at residues 183-253 is small ATPAse domain (RuvB-S); sequence TVDELFEIVS…LADHALTRLG (71 aa). The tract at residues 256 to 341 is head domain (RuvB-H); the sequence is QLGLDGADRR…RPPGQSDLFG (86 aa). Residues Arg-292, Arg-311, and Arg-316 each coordinate DNA.

It belongs to the RuvB family. Homohexamer. Forms an RuvA(8)-RuvB(12)-Holliday junction (HJ) complex. HJ DNA is sandwiched between 2 RuvA tetramers; dsDNA enters through RuvA and exits via RuvB. An RuvB hexamer assembles on each DNA strand where it exits the tetramer. Each RuvB hexamer is contacted by two RuvA subunits (via domain III) on 2 adjacent RuvB subunits; this complex drives branch migration. In the full resolvosome a probable DNA-RuvA(4)-RuvB(12)-RuvC(2) complex forms which resolves the HJ.

The protein localises to the cytoplasm. It carries out the reaction ATP + H2O = ADP + phosphate + H(+). In terms of biological role, the RuvA-RuvB-RuvC complex processes Holliday junction (HJ) DNA during genetic recombination and DNA repair, while the RuvA-RuvB complex plays an important role in the rescue of blocked DNA replication forks via replication fork reversal (RFR). RuvA specifically binds to HJ cruciform DNA, conferring on it an open structure. The RuvB hexamer acts as an ATP-dependent pump, pulling dsDNA into and through the RuvAB complex. RuvB forms 2 homohexamers on either side of HJ DNA bound by 1 or 2 RuvA tetramers; 4 subunits per hexamer contact DNA at a time. Coordinated motions by a converter formed by DNA-disengaged RuvB subunits stimulates ATP hydrolysis and nucleotide exchange. Immobilization of the converter enables RuvB to convert the ATP-contained energy into a lever motion, pulling 2 nucleotides of DNA out of the RuvA tetramer per ATP hydrolyzed, thus driving DNA branch migration. The RuvB motors rotate together with the DNA substrate, which together with the progressing nucleotide cycle form the mechanistic basis for DNA recombination by continuous HJ branch migration. Branch migration allows RuvC to scan DNA until it finds its consensus sequence, where it cleaves and resolves cruciform DNA. The protein is Holliday junction branch migration complex subunit RuvB of Ruegeria pomeroyi (strain ATCC 700808 / DSM 15171 / DSS-3) (Silicibacter pomeroyi).